Here is a 541-residue protein sequence, read N- to C-terminus: Glutamyl-tRNA(Gln) amidotransferase subunit B, mitochondrial (541 aa).

It belongs to the GatB/GatE family. GatB subfamily. Subunit of the heterotrimeric GatFAB amidotransferase (AdT) complex, composed of A (HER2), B (PET112) and F (YGR102C) subunits.

Its subcellular location is the mitochondrion. The enzyme catalyses L-glutamyl-tRNA(Gln) + L-glutamine + ATP + H2O = L-glutaminyl-tRNA(Gln) + L-glutamate + ADP + phosphate + H(+). Its function is as follows. Allows the formation of correctly charged Gln-tRNA(Gln) through the transamidation of misacylated Glu-tRNA(Gln) in the mitochondria. The reaction takes place in the presence of glutamine and ATP through an activated gamma-phospho-Glu-tRNA(Gln). This chain is Glutamyl-tRNA(Gln) amidotransferase subunit B, mitochondrial, found in Saccharomyces cerevisiae (strain ATCC 204508 / S288c) (Baker's yeast).